The primary structure comprises 141 residues: Aspartate 1-decarboxylase 1 (141 aa).

S25 acts as the Schiff-base intermediate with substrate; via pyruvic acid in catalysis. Residue S25 is modified to Pyruvic acid (Ser). Substrate is bound at residue T57. The active-site Proton donor is the Y58. Residue 73-75 (GPA) coordinates substrate.

The protein belongs to the PanD family. As to quaternary structure, heterooctamer of four alpha and four beta subunits. Requires pyruvate as cofactor. In terms of processing, is synthesized initially as an inactive proenzyme, which is activated by self-cleavage at a specific serine bond to produce a beta-subunit with a hydroxyl group at its C-terminus and an alpha-subunit with a pyruvoyl group at its N-terminus.

The protein resides in the cytoplasm. It catalyses the reaction L-aspartate + H(+) = beta-alanine + CO2. It participates in cofactor biosynthesis; (R)-pantothenate biosynthesis; beta-alanine from L-aspartate: step 1/1. Catalyzes the pyruvoyl-dependent decarboxylation of aspartate to produce beta-alanine. The chain is Aspartate 1-decarboxylase 1 from Paenarthrobacter aurescens (strain TC1).